A 634-amino-acid chain; its full sequence is Ankyrin repeat protein OPG025 (634 aa).

ANK repeat units lie at residues 36–69 (DGETPLKAYVTKKNNNIKNDVVILLLSSVDYKNI), 70–100 (NDFDIFEYLCSDNIDIDLLKLLISKGIEINS), 103–134 (NGINIVEKYATTSNPNVDVFKLLLDKGIPTCS), 175–211 (MGKTVLYYYIITRSQDGYATSLDVINYLISHKKEMRY), 307–337 (IQDLLLEYVSYHTVYINVIKCMIDEGATLYR), and 412–441 (HGCSILYHCIKSHSVSLVEWLIDNGADINI).

Belongs to the orthopoxvirus OPG025 family. Interacts with components of host SCF complex CUL1 and SKP1 and components of the cullin deneddylation/COP9 signalosome complex subunits COPS7A and COPS7B.

Its function is as follows. Plays a role in the inhibition of host immune repsonse by counteracting the action of interferons on early events in the viral replication cycle. The sequence is that of Ankyrin repeat protein OPG025 (OPG035) from Vaccinia virus (strain Western Reserve) (VACV).